The chain runs to 487 residues: Malonate-semialdehyde dehydrogenase (487 aa).

NAD(+) is bound by residues Ala-150, Phe-152, Lys-176, Glu-179, Arg-180, Ser-229, and Thr-251. Catalysis depends on Cys-284, which acts as the Nucleophile. Glu-382 contributes to the NAD(+) binding site.

It belongs to the aldehyde dehydrogenase family. IolA subfamily. In terms of assembly, homotetramer.

It carries out the reaction 3-oxopropanoate + NAD(+) + CoA + H2O = hydrogencarbonate + acetyl-CoA + NADH + H(+). The enzyme catalyses 2-methyl-3-oxopropanoate + NAD(+) + CoA + H2O = propanoyl-CoA + hydrogencarbonate + NADH + H(+). It functions in the pathway polyol metabolism; myo-inositol degradation into acetyl-CoA; acetyl-CoA from myo-inositol: step 7/7. Functionally, catalyzes the oxidation of malonate semialdehyde (MSA) and methylmalonate semialdehyde (MMSA) into acetyl-CoA and propanoyl-CoA, respectively. Is involved in a myo-inositol catabolic pathway. Bicarbonate, and not CO2, is the end-product of the enzymatic reaction. This chain is Malonate-semialdehyde dehydrogenase, found in Bacillus subtilis (strain 168).